The sequence spans 404 residues: Serine/threonine transporter SstT (404 aa).

The next 9 helical transmembrane spans lie at 17–37, 39–59, 75–95, 138–158, 179–199, 212–232, 287–307, 319–339, and 354–374; these read IGIGVVIGLLLGILLPDVTAI, ILGQLFVGALKAIAPLLVFAL, MTLIIVLYLLGTFLAALVAVI, ALATANYIGVLAWALIFGLAL, IVVWIINVAPIGIMGLVFSTV, LLILVLVGTMLFVALVVNPLL, IPLGAMINMGGAAITINVLTL, FLTALLLSVVAAISACGASGV, and FGISSDLAMQVVGVGFIVGVI.

It belongs to the dicarboxylate/amino acid:cation symporter (DAACS) (TC 2.A.23) family.

Its subcellular location is the cell membrane. It catalyses the reaction L-serine(in) + Na(+)(in) = L-serine(out) + Na(+)(out). The enzyme catalyses L-threonine(in) + Na(+)(in) = L-threonine(out) + Na(+)(out). Its function is as follows. Involved in the import of serine and threonine into the cell, with the concomitant import of sodium (symport system). This Streptococcus equi subsp. equi (strain 4047) protein is Serine/threonine transporter SstT.